The chain runs to 1026 residues: Lon protease homolog, mitochondrial (1026 aa).

Residues 1–29 (MLGTRVTRAVYTRAPLKLQLRALGLHRRY) constitute a mitochondrion transit peptide. Disordered stretches follow at residues 29 to 55 (YVHN…DKKL) and 185 to 206 (ASEE…DKVS). The region spanning 62–345 (MLALPISRRP…KSLLVLKKEL (284 aa)) is the Lon N-terminal domain. Over residues 185 to 194 (ASEETKDEET) the composition is skewed to acidic residues. The segment covering 195-206 (VDKTESATDKVS) has biased composition (basic and acidic residues). Residue 497–504 (GPPGVGKT) participates in ATP binding. A disordered region spans residues 711-785 (TEPLVSTSEE…EEEEDTSMIV (75 aa)). The span at 714-737 (LVSTSEEPQLSQTNQNISSSSAED) shows a compositional bias: polar residues. In terms of domain architecture, Lon proteolytic spans 815-1001 (TTPPGVIMGL…DDIYKRLFSG (187 aa)). Catalysis depends on residues Ser907 and Lys950.

This sequence belongs to the peptidase S16 family. Homohexamer or homoheptamer. Organized in a ring with a central cavity.

Its subcellular location is the mitochondrion matrix. The catalysed reaction is Hydrolysis of proteins in presence of ATP.. ATP-dependent serine protease that mediates the selective degradation of misfolded, unassembled or oxidatively damaged polypeptides as well as certain short-lived regulatory proteins in the mitochondrial matrix. May also have a chaperone function in the assembly of inner membrane protein complexes. Participates in the regulation of mitochondrial gene expression and in the maintenance of the integrity of the mitochondrial genome. Binds to mitochondrial DNA in a site-specific manner. The chain is Lon protease homolog, mitochondrial from Candida glabrata (strain ATCC 2001 / BCRC 20586 / JCM 3761 / NBRC 0622 / NRRL Y-65 / CBS 138) (Yeast).